Here is a 333-residue protein sequence, read N- to C-terminus: Biotin synthase (333 aa).

Residues 47–273 enclose the Radical SAM core domain; that stretch reads YYGNKVKLNM…MNPTKEIRIA (227 aa). C65, C69, and C72 together coordinate [4Fe-4S] cluster. [2Fe-2S] cluster is bound by residues C109, C141, C201, and R271.

It belongs to the radical SAM superfamily. Biotin synthase family. Homodimer. The cofactor is [4Fe-4S] cluster. [2Fe-2S] cluster is required as a cofactor.

It catalyses the reaction (4R,5S)-dethiobiotin + (sulfur carrier)-SH + 2 reduced [2Fe-2S]-[ferredoxin] + 2 S-adenosyl-L-methionine = (sulfur carrier)-H + biotin + 2 5'-deoxyadenosine + 2 L-methionine + 2 oxidized [2Fe-2S]-[ferredoxin]. The protein operates within cofactor biosynthesis; biotin biosynthesis; biotin from 7,8-diaminononanoate: step 2/2. Functionally, catalyzes the conversion of dethiobiotin (DTB) to biotin by the insertion of a sulfur atom into dethiobiotin via a radical-based mechanism. The polypeptide is Biotin synthase (Geobacillus kaustophilus (strain HTA426)).